The chain runs to 579 residues: Aspartate--tRNA(Asp/Asn) ligase (579 aa).

Glu171 is an L-aspartate binding site. Residues 195–198 form an aspartate region; it reads QLFK. Residue Arg217 participates in L-aspartate binding. ATP-binding positions include 217 to 219 and Gln226; that span reads RDE. His444 contacts L-aspartate. Residue Glu475 participates in ATP binding. Position 482 (Arg482) interacts with L-aspartate. 527 to 530 is an ATP binding site; sequence GLDR.

The protein belongs to the class-II aminoacyl-tRNA synthetase family. Type 1 subfamily. In terms of assembly, homodimer.

The protein resides in the cytoplasm. The enzyme catalyses tRNA(Asx) + L-aspartate + ATP = L-aspartyl-tRNA(Asx) + AMP + diphosphate. Functionally, aspartyl-tRNA synthetase with relaxed tRNA specificity since it is able to aspartylate not only its cognate tRNA(Asp) but also tRNA(Asn). Reaction proceeds in two steps: L-aspartate is first activated by ATP to form Asp-AMP and then transferred to the acceptor end of tRNA(Asp/Asn). The sequence is that of Aspartate--tRNA(Asp/Asn) ligase from Thermotoga neapolitana (strain ATCC 49049 / DSM 4359 / NBRC 107923 / NS-E).